A 398-amino-acid polypeptide reads, in one-letter code: Minor capsid protein (398 aa).

The tract at residues 359–398 (EEASVTSTEETLTPAQEAARTRAANKARKEAELAAATAEQ) is disordered. Residues 362–372 (SVTSTEETLTP) are compositionally biased toward polar residues. A compositionally biased stretch (low complexity) spans 373 to 382 (AQEAARTRAA).

This sequence belongs to the T7virus minor capsid protein family. In terms of assembly, interacts with the connector protein and the major capsid protein.

It localises to the virion. Functionally, assembles with the major capsid protein to form an icosahedral capsid with a T=7 symmetry, about 60 nm in diameter, and consisting of 415 capsid proteins. The major and minor capsid proteins are incorporated into the capsid in about a 90/10 ratio respectively. Once the capsid formed, encapsidates one single copy of the viral genome. In Escherichia coli (Bacteriophage T7), this protein is Minor capsid protein.